Consider the following 528-residue polypeptide: 2-isopropylmalate synthase (528 aa).

The Pyruvate carboxyltransferase domain occupies 12 to 279 (IRIFDTTLRD…DSSINTPRIV (268 aa)). D21, H214, H216, and N250 together coordinate Mn(2+). Residues 401–528 (RLASMTISDV…TTEAPAPATA (128 aa)) are regulatory domain.

The protein belongs to the alpha-IPM synthase/homocitrate synthase family. LeuA type 1 subfamily. Homodimer. It depends on Mn(2+) as a cofactor.

The protein localises to the cytoplasm. The catalysed reaction is 3-methyl-2-oxobutanoate + acetyl-CoA + H2O = (2S)-2-isopropylmalate + CoA + H(+). It participates in amino-acid biosynthesis; L-leucine biosynthesis; L-leucine from 3-methyl-2-oxobutanoate: step 1/4. In terms of biological role, catalyzes the condensation of the acetyl group of acetyl-CoA with 3-methyl-2-oxobutanoate (2-ketoisovalerate) to form 3-carboxy-3-hydroxy-4-methylpentanoate (2-isopropylmalate). This is 2-isopropylmalate synthase from Stenotrophomonas maltophilia (strain R551-3).